The sequence spans 64 residues: Bacteriocin plantaricin ASM1 (64 aa).

The N-terminal stretch at 1-21 (MSKLVKTLTVDEISKIQTNGG) is a signal peptide. The segment at residues 61-64 (SYHC) is a cross-link (lanthionine (Ser-Cys)).

Contains 2 disulfide bonds.

It localises to the secreted. Bacteriocin with a narrow antibacterial spectrum. Antibacterial activity against the Gram-positive bacteria L.plantarun, L.pentosus, L.curvatus, L.lindneri, L.mesenteroides and E.faecilis. Lacks antibacterial activity against the Gram-positive bacteria L.brevis, L.sakei, L.lactis, P.acidilactici, B.subtilis, B.cereus, L.monocytogenes and S.aureus, and against the Gram-negative bacteria E.coli and S.typhimurium. In Lactiplantibacillus plantarum (Lactobacillus plantarum), this protein is Bacteriocin plantaricin ASM1.